A 249-amino-acid chain; its full sequence is Type III pantothenate kinase (249 aa).

Position 6–13 (6–13 (DCGNSLIK)) interacts with ATP. Substrate is bound by residues Tyr93 and 100–103 (GLDR). The active-site Proton acceptor is Asp102. K(+) is bound at residue Asp122. Residue Thr125 participates in ATP binding. Thr181 lines the substrate pocket.

This sequence belongs to the type III pantothenate kinase family. Homodimer. NH4(+) is required as a cofactor. It depends on K(+) as a cofactor.

The protein resides in the cytoplasm. It carries out the reaction (R)-pantothenate + ATP = (R)-4'-phosphopantothenate + ADP + H(+). The protein operates within cofactor biosynthesis; coenzyme A biosynthesis; CoA from (R)-pantothenate: step 1/5. In terms of biological role, catalyzes the phosphorylation of pantothenate (Pan), the first step in CoA biosynthesis. In Pseudomonas paraeruginosa (strain DSM 24068 / PA7) (Pseudomonas aeruginosa (strain PA7)), this protein is Type III pantothenate kinase.